Consider the following 130-residue polypeptide: Small ribosomal subunit protein uS9 (130 aa).

The segment at 109–130 (RAKERKKYGLYGARRSPQFTKR) is disordered.

The protein belongs to the universal ribosomal protein uS9 family.

The protein is Small ribosomal subunit protein uS9 of Malacoplasma penetrans (strain HF-2) (Mycoplasma penetrans).